Consider the following 278-residue polypeptide: Probable cytochrome c oxidase subunit 3 (278 aa).

6 helical membrane passes run 21–41 (PWPVLTSFALLLLVIGGVSFM), 46–66 (FNIYILSAGVISVGYCLYSWW), 89–109 (IGMALFILTEIVFFGVFFASF), 174–194 (CVTALALTILLGIFFTTMQAY), 212–232 (FYLATGFHGAHVIIGTIFLIV), and 256–276 (AWYWHFVDVVWLFLFTFVYIF).

This sequence belongs to the cytochrome c oxidase subunit 3 family.

Its subcellular location is the cell membrane. The enzyme catalyses 4 Fe(II)-[cytochrome c] + O2 + 8 H(+)(in) = 4 Fe(III)-[cytochrome c] + 2 H2O + 4 H(+)(out). This is Probable cytochrome c oxidase subunit 3 (ctaE) from Rickettsia felis (strain ATCC VR-1525 / URRWXCal2) (Rickettsia azadi).